A 104-amino-acid chain; its full sequence is uncharacterized protein (104 aa).

This is an uncharacterized protein from Galliformes (FAdV-1).